Reading from the N-terminus, the 671-residue chain is cGMP-dependent protein kinase 1 (671 aa).

An N-acetylserine modification is found at Ser2. Residues 2–59 are a coiled coil; the sequence is SELEEDFAKILMLKEERIKELEKRLSEKEEEIQELKRKLHKCQSVLPVPSTHIGPRTT. The tract at residues 2–102 is required for dimerization; that stretch reads SELEEDFAKI…LIKEAILDND (101 aa). The tract at residues 9–44 is leucine-zipper; that stretch reads AKILMLKEERIKELEKRLSEKEEEIQELKRKLHKCQ. Positions 50–75 are autoinhibitory domain; sequence PSTHIGPRTTRAQGISAEPQTYRSFH. At Thr59 the chain carries Phosphothreonine; by autocatalysis. The segment at 103 to 220 is cGMP-binding, high affinity; the sequence is FMKNLELSQI…EYMEFLKSVP (118 aa). 3',5'-cyclic GMP is bound by residues 167-170, 177-178, Arg282, 291-294, 301-302, and Tyr336; these read GELA, RT, and GEKA. The cGMP-binding, low affinity stretch occupies residues 221–341; the sequence is TFQSLPDEIL…SNKAYEDAEA (121 aa). The Protein kinase domain occupies 360 to 619; that stretch reads FNIIDTLGVG…VKDIQKHKWF (260 aa). Residues 366–374 and Lys390 each bind ATP; that span reads LGVGGFGRV. Catalysis depends on Asp484, which acts as the Proton acceptor. Thr515 is subject to Phosphothreonine. Residues 620 to 671 form the AGC-kinase C-terminal domain; that stretch reads EGFNWEGLRKGTLTPPIIPSVASPTDTSNFDSFPEDSDEPPPDDNSGWDIDF. The interval 635 to 671 is disordered; that stretch reads PIIPSVASPTDTSNFDSFPEDSDEPPPDDNSGWDIDF. The span at 652–661 shows a compositional bias: acidic residues; sequence FPEDSDEPPP.

This sequence belongs to the protein kinase superfamily. AGC Ser/Thr protein kinase family. cGMP subfamily. Isoform alpha: parallel homodimer or heterodimer and also heterotetramer. Interacts directly with PPP1R12A. Non-covalent dimer of dimer of PRKG1-PRKG1 and PPP1R12A-PPP1R12A. This interaction targets PRKG1 to stress fibers to mediate smooth muscle cell relaxation and vasodilation in responses to rises in cGMP. Isoform beta: antiparallel homodimer. Part of cGMP kinase signaling complex at least composed of ACTA2/alpha-actin, CNN1/calponin H1, PLN/phospholamban, PRKG1 and ITPR1. Interacts with IRAG1. Forms a stable complex with ITPR1, IRAG1, and isoform beta of PRKG1. Interacts with TRPC7 (via ankyrin repeat domain). Isoform alpha interacts with RGS2. Interacts with GTF2I. Autophosphorylation increases kinase activity. In terms of processing, 65 kDa monomer is produced by proteolytic cleavage. Detected in cerebellum, hippocampus, dorsomedial hypothalamus, medulla, subcommissural organ, cerebral cortex, amygdala, habenulae, various hypothalamic regions, olfactory bulb, pituitary gland, and retina. Isoform alpha is prominent in the cerebellum and medulla, whereas isoform Beta is predominant in the cortex, hippocampus, hypothalamus, and olfactory bulb.

It localises to the cytoplasm. The catalysed reaction is L-seryl-[protein] + ATP = O-phospho-L-seryl-[protein] + ADP + H(+). It carries out the reaction L-threonyl-[protein] + ATP = O-phospho-L-threonyl-[protein] + ADP + H(+). Its activity is regulated as follows. In the absence of cGMP, PRKG1 activity is suppressed by autoinhibitory contacts. Serine/threonine protein kinase that acts as a key mediator of the nitric oxide (NO)/cGMP signaling pathway. GMP binding activates PRKG1, which phosphorylates serines and threonines on many cellular proteins. Numerous protein targets for PRKG1 phosphorylation are implicated in modulating cellular calcium, but the contribution of each of these targets may vary substantially among cell types. Proteins that are phosphorylated by PRKG1 regulate platelet activation and adhesion, smooth muscle contraction, cardiac function, gene expression, feedback of the NO-signaling pathway, and other processes involved in several aspects of the CNS like axon guidance, hippocampal and cerebellar learning, circadian rhythm and nociception. Smooth muscle relaxation is mediated through lowering of intracellular free calcium, by desensitization of contractile proteins to calcium, and by decrease in the contractile state of smooth muscle or in platelet activation. Regulates intracellular calcium levels via several pathways: phosphorylates IRAG1 and inhibits IP3-induced Ca(2+) release from intracellular stores, phosphorylation of KCNMA1 (BKCa) channels decreases intracellular Ca(2+) levels, which leads to increased opening of this channel. PRKG1 phosphorylates the canonical transient receptor potential channel (TRPC) family which inactivates the associated inward calcium current. Another mode of action of NO/cGMP/PKGI signaling involves PKGI-mediated inactivation of the Ras homolog gene family member A (RhoA). Phosphorylation of RHOA by PRKG1 blocks the action of this protein in myriad processes: regulation of RHOA translocation; decreasing contraction; controlling vesicle trafficking, reduction of myosin light chain phosphorylation resulting in vasorelaxation. Activation of PRKG1 by NO signaling also alters gene expression in a number of tissues. In smooth muscle cells, increased cGMP and PRKG1 activity influence expression of smooth muscle-specific contractile proteins, levels of proteins in the NO/cGMP signaling pathway, down-regulation of the matrix proteins osteopontin and thrombospondin-1 to limit smooth muscle cell migration and phenotype. Regulates vasodilator-stimulated phosphoprotein (VASP) functions in platelets and smooth muscle. This is cGMP-dependent protein kinase 1 (Prkg1) from Mus musculus (Mouse).